We begin with the raw amino-acid sequence, 360 residues long: Nucleoporin SEH1 (360 aa).

6 WD repeats span residues 10–49 (DHKD…DWHC), 55–96 (THSG…SNDK), 111–152 (DSRT…NLSQ), 160–210 (SCKL…RKYA), 217–258 (SVSD…KELS), and 276–315 (NHNS…NWKC).

It belongs to the WD repeat SEC13 family. In terms of assembly, component of the Nup107-160 subcomplex of the nuclear pore complex (NPC). The Nup107-160 subcomplex includes NUP160, NUP133, NUP107, NUP98, NUP85, NUP43, NUP37, SEH1 and SEC13. Component of the GATOR2 subcomplex, composed of MIOS, SEC13, SEH1L, WDR24 and WDR59. The GATOR2 complex interacts with CASTOR1 and CASTOR2; the interaction is negatively regulated by arginine. The GATOR2 complex interacts with SESN1, SESN2 and SESN3; the interaction is negatively regulated by amino acids.

It localises to the chromosome. The protein localises to the centromere. It is found in the kinetochore. Its subcellular location is the nucleus. The protein resides in the nuclear pore complex. It localises to the lysosome membrane. Its activity is regulated as follows. The GATOR2 complex is negatively regulated by the upstream amino acid sensors CASTOR1 and SESN2, which sequester the GATOR2 complex in absence of amino acids. In the presence of abundant amino acids, GATOR2 is released from CASTOR1 and SESN2 and activated. In terms of biological role, component of the Nup107-160 subcomplex of the nuclear pore complex (NPC). The Nup107-160 subcomplex is required for the assembly of a functional NPC. The Nup107-160 subcomplex is also required for normal kinetochore microtubule attachment, mitotic progression and chromosome segregation. This subunit plays a role in recruitment of the Nup107-160 subcomplex to the kinetochore. Functionally, as a component of the GATOR2 complex, functions as an activator of the amino acid-sensing branch of the mTORC1 signaling pathway. The GATOR2 complex indirectly activates mTORC1 through the inhibition of the GATOR1 subcomplex. GATOR2 probably acts as an E3 ubiquitin-protein ligase toward GATOR1. In the presence of abundant amino acids, the GATOR2 complex mediates ubiquitination of the NPRL2 core component of the GATOR1 complex, leading to GATOR1 inactivation. In the absence of amino acids, GATOR2 is inhibited, activating the GATOR1 complex. The chain is Nucleoporin SEH1 (seh1l) from Xenopus tropicalis (Western clawed frog).